A 150-amino-acid chain; its full sequence is Small ribosomal subunit protein eS19 (150 aa).

Belongs to the eukaryotic ribosomal protein eS19 family. Part of the 30S ribosomal subunit.

Its function is as follows. May be involved in maturation of the 30S ribosomal subunit. This chain is Small ribosomal subunit protein eS19 (rps19e), found in Pyrococcus abyssi (strain GE5 / Orsay).